The following is a 367-amino-acid chain: tRNA-specific 2-thiouridylase MnmA (367 aa).

Residues 7-14 (AMSGGVDS) and Met33 contribute to the ATP site. The Nucleophile role is filled by Cys108. A disulfide bond links Cys108 and Cys200. Gly132 provides a ligand contact to ATP. The tract at residues 150-152 (KDQ) is interaction with tRNA. Cys200 (cysteine persulfide intermediate) is an active-site residue. Residues 301-302 (RY) are interaction with tRNA.

The protein belongs to the MnmA/TRMU family.

The protein localises to the cytoplasm. The catalysed reaction is S-sulfanyl-L-cysteinyl-[protein] + uridine(34) in tRNA + AH2 + ATP = 2-thiouridine(34) in tRNA + L-cysteinyl-[protein] + A + AMP + diphosphate + H(+). Functionally, catalyzes the 2-thiolation of uridine at the wobble position (U34) of tRNA, leading to the formation of s(2)U34. The protein is tRNA-specific 2-thiouridylase MnmA of Thermus thermophilus (strain ATCC BAA-163 / DSM 7039 / HB27).